Here is an 85-residue protein sequence, read N- to C-terminus: V-type proton ATPase subunit f (85 aa).

The Lumenal portion of the chain corresponds to 1–10 (MRPVVSTGKA). A helical membrane pass occupies residues 11-31 (WCCTVLSAFGVVILSVIAHLF). Over 32–54 (NTNHESFVGSINDPEDGPAVAHT) the chain is Cytoplasmic. A helical membrane pass occupies residues 55–75 (VYLAALVYLVFFVFCGFQVYL). The Lumenal segment spans residues 76 to 85 (ARRKPSIELR).

V-ATPase is a heteromultimeric enzyme composed of a peripheral catalytic V1 complex (components A to H) attached to an integral membrane V0 proton pore complex (components: a, c, c', c'', d, e, f and VOA1).

The protein localises to the endoplasmic reticulum membrane. Its subcellular location is the vacuole membrane. Accessory component of the V0 complex of vacuolar(H+)-ATPase (V-ATPase), a multisubunit enzyme composed of a peripheral complex (V1) that hydrolyzes ATP and a membrane integral complex (V0) that translocates protons. V-ATPase is responsible for acidifying and maintaining the pH of intracellular compartments. The protein is V-type proton ATPase subunit f of Saccharomyces cerevisiae (strain ATCC 204508 / S288c) (Baker's yeast).